The primary structure comprises 332 residues: Ketol-acid reductoisomerase (NADP(+)) (332 aa).

In terms of domain architecture, KARI N-terminal Rossmann spans 2 to 182 (AKVYYDEDAS…GCTRAGLIET (181 aa)). Residues 25 to 28 (YGSQ), Ser-51, Ser-53, and 83 to 86 (DTIQ) contribute to the NADP(+) site. The active site involves His-108. An NADP(+)-binding site is contributed by Gly-134. The region spanning 183 to 327 (TFKEETETDL…KELRKMMPWL (145 aa)) is the KARI C-terminal knotted domain. Mg(2+) is bound by residues Asp-191, Glu-195, Glu-227, and Glu-231. Ser-252 is a substrate binding site.

Belongs to the ketol-acid reductoisomerase family. Mg(2+) is required as a cofactor.

It catalyses the reaction (2R)-2,3-dihydroxy-3-methylbutanoate + NADP(+) = (2S)-2-acetolactate + NADPH + H(+). It carries out the reaction (2R,3R)-2,3-dihydroxy-3-methylpentanoate + NADP(+) = (S)-2-ethyl-2-hydroxy-3-oxobutanoate + NADPH + H(+). It participates in amino-acid biosynthesis; L-isoleucine biosynthesis; L-isoleucine from 2-oxobutanoate: step 2/4. The protein operates within amino-acid biosynthesis; L-valine biosynthesis; L-valine from pyruvate: step 2/4. Functionally, involved in the biosynthesis of branched-chain amino acids (BCAA). Catalyzes an alkyl-migration followed by a ketol-acid reduction of (S)-2-acetolactate (S2AL) to yield (R)-2,3-dihydroxy-isovalerate. In the isomerase reaction, S2AL is rearranged via a Mg-dependent methyl migration to produce 3-hydroxy-3-methyl-2-ketobutyrate (HMKB). In the reductase reaction, this 2-ketoacid undergoes a metal-dependent reduction by NADPH to yield (R)-2,3-dihydroxy-isovalerate. The protein is Ketol-acid reductoisomerase (NADP(+)) of Persephonella marina (strain DSM 14350 / EX-H1).